A 602-amino-acid chain; its full sequence is Sulfite reductase [NADPH] flavoprotein alpha-component (602 aa).

The Flavodoxin-like domain maps to 68–206 (ITIISASQTG…NYIQWSEELL (139 aa)). Residues 74 to 79 (SQTGNA), 121 to 124 (STQG), and 157 to 166 (LGDVSYNLFC) each bind FMN. An FAD-binding FR-type domain is found at 237 to 451 (YKPAVATVLL…VEEKSNFRLP (215 aa)). FAD-binding positions include T325, K359, 389–392 (RLYS), 407–409 (TVG), and 422–425 (GGSS). NADP(+) is bound by residues 522-523 (SR), 528-532 (KIYVQ), and D564. An FAD-binding site is contributed by Y602.

The protein belongs to the NADPH-dependent sulphite reductase flavoprotein subunit CysJ family. This sequence in the N-terminal section; belongs to the flavodoxin family. In the C-terminal section; belongs to the flavoprotein pyridine nucleotide cytochrome reductase family. As to quaternary structure, alpha(8)-beta(8). The alpha component is a flavoprotein, the beta component is a hemoprotein. The cofactor is FAD. It depends on FMN as a cofactor.

It carries out the reaction hydrogen sulfide + 3 NADP(+) + 3 H2O = sulfite + 3 NADPH + 4 H(+). Its pathway is sulfur metabolism; hydrogen sulfide biosynthesis; hydrogen sulfide from sulfite (NADPH route): step 1/1. Functionally, component of the sulfite reductase complex that catalyzes the 6-electron reduction of sulfite to sulfide. This is one of several activities required for the biosynthesis of L-cysteine from sulfate. The flavoprotein component catalyzes the electron flow from NADPH -&gt; FAD -&gt; FMN to the hemoprotein component. The sequence is that of Sulfite reductase [NADPH] flavoprotein alpha-component from Buchnera aphidicola subsp. Schizaphis graminum (strain Sg).